The following is a 99-amino-acid chain: MASYQVRLINKKQDIDTTIEIDEETTILDGAEENGIELPFSCHSGSCSSCVGKVVEGEVDQSDQIFLDDEQMGKGFALLCVTYPRSNCTIKTHQEPYLA.

A 2Fe-2S ferredoxin-type domain is found at 4–96 (YQVRLINKKQ…NCTIKTHQEP (93 aa)). The [2Fe-2S] cluster site is built by cysteine 42, cysteine 47, cysteine 50, and cysteine 80.

Belongs to the 2Fe2S plant-type ferredoxin family. [2Fe-2S] cluster serves as cofactor.

Functionally, ferredoxins are iron-sulfur proteins that transfer electrons in a wide variety of metabolic reactions. Donates electrons to the nitrogenase. This Nostoc sp. (strain PCC 7120 / SAG 25.82 / UTEX 2576) protein is Ferredoxin, heterocyst (fdxH).